A 325-amino-acid chain; its full sequence is Biotin synthase (325 aa).

Residues 49–267 (TQVQISTLLS…IAAARISMPR (219 aa)) form the Radical SAM core domain. Cysteine 64, cysteine 68, and cysteine 71 together coordinate [4Fe-4S] cluster. [2Fe-2S] cluster is bound by residues cysteine 108, cysteine 139, cysteine 199, and arginine 271.

The protein belongs to the radical SAM superfamily. Biotin synthase family. Homodimer. Requires [4Fe-4S] cluster as cofactor. [2Fe-2S] cluster is required as a cofactor.

It carries out the reaction (4R,5S)-dethiobiotin + (sulfur carrier)-SH + 2 reduced [2Fe-2S]-[ferredoxin] + 2 S-adenosyl-L-methionine = (sulfur carrier)-H + biotin + 2 5'-deoxyadenosine + 2 L-methionine + 2 oxidized [2Fe-2S]-[ferredoxin]. It functions in the pathway cofactor biosynthesis; biotin biosynthesis; biotin from 7,8-diaminononanoate: step 2/2. Catalyzes the conversion of dethiobiotin (DTB) to biotin by the insertion of a sulfur atom into dethiobiotin via a radical-based mechanism. The sequence is that of Biotin synthase from Acidiphilium cryptum (strain JF-5).